Reading from the N-terminus, the 357-residue chain is DNA replication and repair protein RecF (357 aa).

30 to 37 (GANGSGKT) contributes to the ATP binding site.

It belongs to the RecF family.

Its subcellular location is the cytoplasm. Functionally, the RecF protein is involved in DNA metabolism; it is required for DNA replication and normal SOS inducibility. RecF binds preferentially to single-stranded, linear DNA. It also seems to bind ATP. The polypeptide is DNA replication and repair protein RecF (Salmonella arizonae (strain ATCC BAA-731 / CDC346-86 / RSK2980)).